We begin with the raw amino-acid sequence, 618 residues long: Probable Xaa-Pro aminopeptidase P (618 aa).

Mn(2+)-binding residues include D414, D425, E523, and E537.

The protein belongs to the peptidase M24B family. The cofactor is Mn(2+).

It catalyses the reaction Release of any N-terminal amino acid, including proline, that is linked to proline, even from a dipeptide or tripeptide.. Functionally, catalyzes the removal of a penultimate prolyl residue from the N-termini of peptides. The chain is Probable Xaa-Pro aminopeptidase P (AMPP) from Metarhizium acridum (strain CQMa 102).